We begin with the raw amino-acid sequence, 197 residues long: Guanylate kinase (197 aa).

One can recognise a Guanylate kinase-like domain in the interval 7 to 185 (GLIIILSSPS…TLKKIHEIIV (179 aa)). Position 14–21 (14–21 (SPSGTGKS)) interacts with ATP.

This sequence belongs to the guanylate kinase family.

It localises to the cytoplasm. The enzyme catalyses GMP + ATP = GDP + ADP. Its function is as follows. Essential for recycling GMP and indirectly, cGMP. This chain is Guanylate kinase, found in Rickettsia typhi (strain ATCC VR-144 / Wilmington).